The following is a 178-amino-acid chain: Probable chorismate pyruvate-lyase (178 aa).

Residues Met-37, Arg-78, Leu-114, and Glu-165 each contribute to the substrate site.

The protein belongs to the UbiC family.

The protein localises to the cytoplasm. It catalyses the reaction chorismate = 4-hydroxybenzoate + pyruvate. It functions in the pathway cofactor biosynthesis; ubiquinone biosynthesis. Removes the pyruvyl group from chorismate, with concomitant aromatization of the ring, to provide 4-hydroxybenzoate (4HB) for the ubiquinone pathway. The sequence is that of Probable chorismate pyruvate-lyase from Aeromonas salmonicida (strain A449).